The chain runs to 170 residues: Lipoprotein signal peptidase (170 aa).

The next 4 membrane-spanning stretches (helical) occupy residues 11 to 31, 41 to 61, 69 to 89, and 95 to 115; these read LGWL…KAHF, IVVI…AAFS, WQRW…VVWL, and DDTW…GNLY. Active-site residues include aspartate 125 and aspartate 144. Residues 136–156 form a helical membrane-spanning segment; that stretch reads YFPAFNFADSAITVGAIMLAL.

Belongs to the peptidase A8 family.

The protein localises to the cell inner membrane. The catalysed reaction is Release of signal peptides from bacterial membrane prolipoproteins. Hydrolyzes -Xaa-Yaa-Zaa-|-(S,diacylglyceryl)Cys-, in which Xaa is hydrophobic (preferably Leu), and Yaa (Ala or Ser) and Zaa (Gly or Ala) have small, neutral side chains.. Its pathway is protein modification; lipoprotein biosynthesis (signal peptide cleavage). Its function is as follows. This protein specifically catalyzes the removal of signal peptides from prolipoproteins. This is Lipoprotein signal peptidase from Pseudomonas fluorescens.